A 1046-amino-acid polypeptide reads, in one-letter code: Protein HBT1 (1046 aa).

Disordered stretches follow at residues 1–455 (MNMN…AAEK), 469–894 (DYQQ…LGGA), and 908–1046 (PSLI…RSEI). At Ser-41 the chain carries Phosphoserine. Residues 81-96 (KDSETPHEDTEADANR) are compositionally biased toward basic and acidic residues. 3 stretches are compositionally biased toward polar residues: residues 98–149 (ANVT…SPPT), 175–191 (IATT…TSPV), and 228–301 (ANTG…NTDS). Ser-303 is modified (phosphoserine). A compositionally biased stretch (polar residues) spans 327 to 341 (VYTSTGPKSNVSSGM). Ser-363 is modified (phosphoserine). Polar residues-rich tracts occupy residues 389–408 (QTGL…QQTM) and 420–429 (GFVSQQPSYH). Residues 430–455 (DSNKNIQHPEKNKVDNKNISERAAEK) show a composition bias toward basic and acidic residues. A compositionally biased stretch (polar residues) spans 488 to 498 (YSSSAGKNKNL). A Phosphoserine modification is found at Ser-491. Residues 529–538 (GHMKYNDNGR) are compositionally biased toward basic and acidic residues. Residues 548-559 (QAGSQNTNNNID) are compositionally biased toward polar residues. The residue at position 561 (Ser-561) is a Phosphoserine. Over residues 570-582 (GLSNDATTRNNVV) the composition is skewed to polar residues. The segment covering 586-597 (MKDEDMNEDSTK) has biased composition (basic and acidic residues). Acidic residues predominate over residues 605 to 619 (YLDDVEDYHENDIDD). The segment covering 621-630 (SNAKKNDLYS) has biased composition (basic and acidic residues). At Ser-671 the chain carries Phosphoserine. The segment covering 742–756 (FTNNPETGTTGNVDT) has biased composition (polar residues). Residues 773–782 (DDSKNTDTHL) show a composition bias toward basic and acidic residues. Polar residues-rich tracts occupy residues 792 to 802 (NSRSGDTTYSK) and 837 to 855 (SSEQ…NQEY). Tyr-855 is modified (phosphotyrosine). Ser-857 bears the Phosphoserine mark. Residues 868-890 (KVLEEDAPGYKREVDLKNKRRTD) show a composition bias toward basic and acidic residues. Residues 922 to 951 (DTNTSSSQKPSEGTYPETTSYSIHNETTSQ) are compositionally biased toward polar residues. Residues 952-963 (GRKVSVGSMGSG) show a composition bias toward low complexity. Residues 964 to 976 (KSKHHHNHHRHSR) are compositionally biased toward basic residues. Ser-1005 carries the phosphoserine modification. Residues 1006 to 1019 (DEGEQDYHDDEQGE) are compositionally biased toward acidic residues. Residue Ser-1034 is modified to Phosphoserine.

As to quaternary structure, conjugated with HUB1. HUB1 has not the classical C-terminal Gly residue, so it is still unknown how conjugation may occur.

It is found in the cytoplasm. Functionally, polarity-determining protein which forms a conjugate with the ubiquitin-like modifier HUB1. Involved in bud site selection and cellular morphogenesis during conjugation. Required for survival during stationary phase. The polypeptide is Protein HBT1 (HBT1) (Saccharomyces cerevisiae (strain ATCC 204508 / S288c) (Baker's yeast)).